A 157-amino-acid chain; its full sequence is Endoribonuclease YbeY (157 aa).

Histidine 118, histidine 122, and histidine 128 together coordinate Zn(2+).

Belongs to the endoribonuclease YbeY family. Zn(2+) is required as a cofactor.

The protein resides in the cytoplasm. In terms of biological role, single strand-specific metallo-endoribonuclease involved in late-stage 70S ribosome quality control and in maturation of the 3' terminus of the 16S rRNA. The sequence is that of Endoribonuclease YbeY from Bordetella bronchiseptica (strain ATCC BAA-588 / NCTC 13252 / RB50) (Alcaligenes bronchisepticus).